We begin with the raw amino-acid sequence, 379 residues long: Tubby-like F-box protein 7 (379 aa).

Polar residues predominate over residues 18-28 (FHQGETTTAPE). The interval 18–41 (FHQGETTTAPESESIPPPSNMAGS) is disordered. One can recognise an F-box domain in the interval 42–97 (SSWSAMLPELLGEIIRRVEETEDRWPQRRDVVTCACVSKKWREITHDFARSSLNSG). Disordered regions lie at residues 193–212 (SQPP…RRFA) and 248–278 (TLRC…IMKK).

Belongs to the TUB family. Ubiquitous.

This Arabidopsis thaliana (Mouse-ear cress) protein is Tubby-like F-box protein 7.